The chain runs to 269 residues: Ubiquinone/menaquinone biosynthesis C-methyltransferase UbiE (269 aa).

Residues Thr92, Asp113, and 141–142 (NA) contribute to the S-adenosyl-L-methionine site.

Belongs to the class I-like SAM-binding methyltransferase superfamily. MenG/UbiE family.

The enzyme catalyses a 2-demethylmenaquinol + S-adenosyl-L-methionine = a menaquinol + S-adenosyl-L-homocysteine + H(+). The catalysed reaction is a 2-methoxy-6-(all-trans-polyprenyl)benzene-1,4-diol + S-adenosyl-L-methionine = a 5-methoxy-2-methyl-3-(all-trans-polyprenyl)benzene-1,4-diol + S-adenosyl-L-homocysteine + H(+). It participates in quinol/quinone metabolism; menaquinone biosynthesis; menaquinol from 1,4-dihydroxy-2-naphthoate: step 2/2. Its pathway is cofactor biosynthesis; ubiquinone biosynthesis. Methyltransferase required for the conversion of demethylmenaquinol (DMKH2) to menaquinol (MKH2) and the conversion of 2-polyprenyl-6-methoxy-1,4-benzoquinol (DDMQH2) to 2-polyprenyl-3-methyl-6-methoxy-1,4-benzoquinol (DMQH2). This is Ubiquinone/menaquinone biosynthesis C-methyltransferase UbiE from Brucella suis biovar 1 (strain 1330).